The sequence spans 225 residues: 7-cyano-7-deazaguanine synthase (225 aa).

Position 10–20 (10–20) interacts with ATP; it reads FSGGQDSTTLA. Residues Cys190, Cys205, Cys208, and Cys211 each coordinate Zn(2+).

It belongs to the QueC family. The cofactor is Zn(2+).

The catalysed reaction is 7-carboxy-7-deazaguanine + NH4(+) + ATP = 7-cyano-7-deazaguanine + ADP + phosphate + H2O + H(+). The protein operates within purine metabolism; 7-cyano-7-deazaguanine biosynthesis. Catalyzes the ATP-dependent conversion of 7-carboxy-7-deazaguanine (CDG) to 7-cyano-7-deazaguanine (preQ(0)). The chain is 7-cyano-7-deazaguanine synthase from Helicobacter pylori (strain J99 / ATCC 700824) (Campylobacter pylori J99).